The sequence spans 92 residues: Phenol 2-monooxygenase, auxiliary component DmpK (92 aa).

In terms of assembly, homotrimer or homotetramer. Interacts with the phenol hydroxylase components DmpL (P1 component) and DmpN (P3 component).

The protein operates within aromatic compound metabolism; phenol degradation. In terms of biological role, dmpK is an auxiliary protein associated with the multicomponent phenol hydroxylase DmpLMNOP and it may be involved in the post-translational incorporation of iron into the oxygenase component of the phenol hydroxylase. Required for growth on phenol but not for in vitro phenol hydroxylase activity. The polypeptide is Phenol 2-monooxygenase, auxiliary component DmpK (Pseudomonas sp. (strain CF600)).